The primary structure comprises 425 residues: Phosphoribosylamine--glycine ligase (425 aa).

In terms of domain architecture, ATP-grasp spans 110 to 317; sequence KEFMKRHGIP…LFDALLASVE (208 aa). 137–198 serves as a coordination point for ATP; that stretch reads ETCPTFPQVI…EAFLSGQEAS (62 aa). Mg(2+)-binding residues include Glu287 and Asn289.

It belongs to the GARS family. Mg(2+) is required as a cofactor. Mn(2+) serves as cofactor.

It carries out the reaction 5-phospho-beta-D-ribosylamine + glycine + ATP = N(1)-(5-phospho-beta-D-ribosyl)glycinamide + ADP + phosphate + H(+). It functions in the pathway purine metabolism; IMP biosynthesis via de novo pathway; N(1)-(5-phospho-D-ribosyl)glycinamide from 5-phospho-alpha-D-ribose 1-diphosphate: step 2/2. This is Phosphoribosylamine--glycine ligase from Chlorobaculum tepidum (strain ATCC 49652 / DSM 12025 / NBRC 103806 / TLS) (Chlorobium tepidum).